Consider the following 126-residue polypeptide: Histone H2B type 1-O (126 aa).

The segment covering 1 to 12 (MPDPAKSAPAPK) has biased composition (low complexity). Residues 1-35 (MPDPAKSAPAPKKGSKKAVTKAQKKDGKKRKRSRK) are disordered. Proline 2 carries the N-acetylproline; partial modification. Lysine 6 carries the N6-(2-hydroxyisobutyryl)lysine; alternate modification. Residue lysine 6 is modified to N6-(beta-hydroxybutyryl)lysine; alternate. N6-acetyllysine; alternate is present on lysine 6. The residue at position 6 (lysine 6) is an N6-butyryllysine; alternate. At lysine 6 the chain carries N6-crotonyllysine; alternate. An N6-lactoyllysine; alternate modification is found at lysine 6. Residue lysine 6 forms a Glycyl lysine isopeptide (Lys-Gly) (interchain with G-Cter in SUMO2); alternate linkage. Serine 7 carries the post-translational modification ADP-ribosylserine. The residue at position 12 (lysine 12) is an N6-(beta-hydroxybutyryl)lysine; alternate. Residues lysine 12 and lysine 13 each carry the N6-acetyllysine; alternate modification. 2 positions are modified to N6-crotonyllysine; alternate: lysine 12 and lysine 13. N6-lactoyllysine; alternate is present on lysine 12. At lysine 13 the chain carries N6-(2-hydroxyisobutyryl)lysine; alternate. Serine 15 is modified (phosphoserine; by STK4/MST1). 4 positions are modified to N6-acetyllysine; alternate: lysine 16, lysine 17, lysine 21, and lysine 24. An N6-crotonyllysine; alternate mark is found at lysine 16, lysine 17, lysine 21, and lysine 24. 4 positions are modified to N6-lactoyllysine; alternate: lysine 16, lysine 17, lysine 21, and lysine 24. N6-(beta-hydroxybutyryl)lysine; alternate is present on residues lysine 17 and lysine 21. Lysine 17 is modified (N6-glutaryllysine; alternate). An N6-(2-hydroxyisobutyryl)lysine; alternate mark is found at lysine 21 and lysine 24. Lysine 21 bears the N6-butyryllysine; alternate mark. Lysine 21 is covalently cross-linked (Glycyl lysine isopeptide (Lys-Gly) (interchain with G-Cter in SUMO2); alternate). Lysine 25 carries the post-translational modification N6-(2-hydroxyisobutyryl)lysine. Lysine 35 is subject to N6-(2-hydroxyisobutyryl)lysine; alternate. At lysine 35 the chain carries N6-(beta-hydroxybutyryl)lysine; alternate. Lysine 35 bears the N6-crotonyllysine; alternate mark. Lysine 35 is modified (N6-glutaryllysine; alternate). The residue at position 35 (lysine 35) is an N6-succinyllysine; alternate. A Glycyl lysine isopeptide (Lys-Gly) (interchain with G-Cter in ubiquitin); alternate cross-link involves residue lysine 35. A PolyADP-ribosyl glutamic acid modification is found at glutamate 36. The residue at position 37 (serine 37) is a Phosphoserine; by AMPK. 3 positions are modified to N6-(2-hydroxyisobutyryl)lysine; alternate: lysine 44, lysine 47, and lysine 58. The residue at position 44 (lysine 44) is an N6-lactoyllysine; alternate. Residues lysine 44 and lysine 47 each carry the N6-glutaryllysine; alternate modification. At lysine 47 the chain carries N6-methyllysine; alternate. Lysine 58 is modified (N6,N6-dimethyllysine; alternate). Arginine 80 bears the Dimethylated arginine mark. Lysine 86 is subject to N6-(2-hydroxyisobutyryl)lysine; alternate. The residue at position 86 (lysine 86) is an N6-(beta-hydroxybutyryl)lysine; alternate. Lysine 86 is subject to N6-acetyllysine; alternate. Residue lysine 86 is modified to N6-lactoyllysine; alternate. Lysine 86 bears the N6,N6,N6-trimethyllysine; alternate mark. An omega-N-methylarginine mark is found at arginine 87 and arginine 93. Lysine 109 is modified (N6-(2-hydroxyisobutyryl)lysine; alternate). Lysine 109 is modified (N6-lactoyllysine; alternate). Lysine 109 bears the N6-glutaryllysine; alternate mark. Lysine 109 carries the N6-methyllysine; alternate modification. Serine 113 carries an O-linked (GlcNAc) serine glycan. The residue at position 116 (threonine 116) is a Phosphothreonine. N6-(2-hydroxyisobutyryl)lysine; alternate occurs at positions 117 and 121. 2 positions are modified to N6-(beta-hydroxybutyryl)lysine; alternate: lysine 117 and lysine 121. An N6-lactoyllysine; alternate mark is found at lysine 117 and lysine 121. N6-glutaryllysine; alternate is present on residues lysine 117 and lysine 121. Lysine 117 and lysine 121 each carry N6-succinyllysine; alternate. At lysine 117 the chain carries N6-malonyllysine; alternate. Lysine 117 is subject to N6-methylated lysine; alternate. Residue lysine 121 forms a Glycyl lysine isopeptide (Lys-Gly) (interchain with G-Cter in ubiquitin); alternate linkage.

Belongs to the histone H2B family. The nucleosome is a histone octamer containing two molecules each of H2A, H2B, H3 and H4 assembled in one H3-H4 heterotetramer and two H2A-H2B heterodimers. The octamer wraps approximately 147 bp of DNA. Monoubiquitination at Lys-35 (H2BK34Ub) by the MSL1/MSL2 dimer is required for histone H3 'Lys-4' (H3K4me) and 'Lys-79' (H3K79me) methylation and transcription activation at specific gene loci, such as HOXA9 and MEIS1 loci. Similarly, monoubiquitination at Lys-121 (H2BK120Ub) by the RNF20/40 complex gives a specific tag for epigenetic transcriptional activation and is also prerequisite for histone H3 'Lys-4' and 'Lys-79' methylation. It also functions cooperatively with the FACT dimer to stimulate elongation by RNA polymerase II. H2BK120Ub also acts as a regulator of mRNA splicing: deubiquitination by USP49 is required for efficient cotranscriptional splicing of a large set of exons. In terms of processing, phosphorylation at Ser-37 (H2BS36ph) by AMPK in response to stress promotes transcription. Phosphorylated on Ser-15 (H2BS14ph) by STK4/MST1 during apoptosis; which facilitates apoptotic chromatin condensation. Also phosphorylated on Ser-15 in response to DNA double strand breaks (DSBs), and in correlation with somatic hypermutation and immunoglobulin class-switch recombination. Post-translationally, glcNAcylation at Ser-113 promotes monoubiquitination of Lys-121. It fluctuates in response to extracellular glucose, and associates with transcribed genes. ADP-ribosylated by PARP1 or PARP2 on Ser-7 (H2BS6ADPr) in response to DNA damage. H2BS6ADPr promotes recruitment of CHD1L. Poly ADP-ribosylation on Glu-36 (H2BE35ADPr) by PARP1 regulates adipogenesis: it inhibits phosphorylation at Ser-37 (H2BS36ph), thereby blocking expression of pro-adipogenetic genes. In terms of processing, crotonylation (Kcr) is specifically present in male germ cells and marks testis-specific genes in post-meiotic cells, including X-linked genes that escape sex chromosome inactivation in haploid cells. Crotonylation marks active promoters and enhancers and confers resistance to transcriptional repressors. It is also associated with post-meiotically activated genes on autosomes. Post-translationally, lactylated in macrophages by EP300/P300 by using lactoyl-CoA directly derived from endogenous or exogenous lactate, leading to stimulates gene transcription.

It is found in the nucleus. The protein localises to the chromosome. Its function is as follows. Core component of nucleosome. Nucleosomes wrap and compact DNA into chromatin, limiting DNA accessibility to the cellular machineries which require DNA as a template. Histones thereby play a central role in transcription regulation, DNA repair, DNA replication and chromosomal stability. DNA accessibility is regulated via a complex set of post-translational modifications of histones, also called histone code, and nucleosome remodeling. In Homo sapiens (Human), this protein is Histone H2B type 1-O.